The following is a 383-amino-acid chain: Acetylornithine deacetylase (383 aa).

Histidine 80 lines the Zn(2+) pocket. Aspartate 82 is a catalytic residue. Aspartate 112 is a binding site for Zn(2+). Glutamate 144 is a catalytic residue. Glutamate 145, glutamate 169, and histidine 355 together coordinate Zn(2+).

The protein belongs to the peptidase M20A family. ArgE subfamily. As to quaternary structure, homodimer. The cofactor is Zn(2+). Requires Co(2+) as cofactor. It depends on glutathione as a cofactor.

Its subcellular location is the cytoplasm. It carries out the reaction N(2)-acetyl-L-ornithine + H2O = L-ornithine + acetate. It functions in the pathway amino-acid biosynthesis; L-arginine biosynthesis; L-ornithine from N(2)-acetyl-L-ornithine (linear): step 1/1. Its function is as follows. Catalyzes the hydrolysis of the amide bond of N(2)-acetylated L-amino acids. Cleaves the acetyl group from N-acetyl-L-ornithine to form L-ornithine, an intermediate in L-arginine biosynthesis pathway, and a branchpoint in the synthesis of polyamines. This chain is Acetylornithine deacetylase, found in Escherichia coli O17:K52:H18 (strain UMN026 / ExPEC).